The following is a 253-amino-acid chain: Homeobox protein EMX2 (253 aa).

The homeobox DNA-binding region spans Pro-155 to Lys-214. The interval Gln-213–Asp-253 is disordered. The span at Lys-225 to Arg-234 shows a compositional bias: basic residues.

It belongs to the EMX homeobox family. As to quaternary structure, interacts with translation initiation factor EIF4E.

It localises to the nucleus. Its subcellular location is the cell projection. The protein localises to the axon. Its function is as follows. Transcription factor, which in cooperation with EMX1, acts to generate the boundary between the roof and archipallium in the developing brain. May function in combination with OTX1/2 to specify cell fates in the developing central nervous system. In the inner ear, it controls the distribution of GPR156 at hair cell boundaries, and regulates the organization of stereociliary bundles in opposite orientations across the line of polarity reversal (LPR). The protein is Homeobox protein EMX2 (EMX2) of Bos taurus (Bovine).